A 776-amino-acid polypeptide reads, in one-letter code: MKCPKILAALLGCAVLAGVPAMPAHAAINSMSLGASYDAQQANITFRVYSSQATRIVLYLYSAGYGVQESATYTLSPAGSGVWAVTVPVSSIKAAGITGAVYYGYRAWGPNWPYASNWGKGSQAGFVSDVDANGDRFNPNKLLLDPYAQEVSQDPLNPSNQNGNVFASGASYRTTDSGIYAPKGVVLVPSTQSTGTKPTRAQKDDVIYEVHVRGFTEQDTSIPAQYRGTYYGAGLKASYLASLGVTAVEFLPVQETQNDANDVVPNSDANQNYWGYMTENYFSPDRRYAYNKAAGGPTAEFQAMVQAFHNAGIKVYMDVVYNHTAEGGTWTSSDPTTATIYSWRGLDNATYYELTSGNQYFYDNTGIGANFNTYNTVAQNLIVDSLAYWANTMGVDGFRFDLASVLGNSCLNGAYTASAPNCPNGGYNFDAADSNVAINRILREFTVRPAAGGSGLDLFAEPWAIGGNSYQLGGFPQGWSEWNGLFRDSLRQAQNELGSMTIYVTQDANDFSGSSNLFQSSGRSPWNSINFIDVHDGMTLKDVYSCNGANNSQAWPYGPSDGGTSTNYSWDQGMSAGTGAAVDQRRAARTGMAFEMLSAGTPLMQGGDEYLRTLQCNNNAYNLDSSANWLTYSWTTDQSNFYTFAQRLIAFRKAHPALRPSSWYSGSQLTWYQPSGAVADSNYWNNTSNYAIAYAINGPSLGDSNSIYVAYNGWSSSVTFTLPAPPSGTQWYRVTDTCDWNDGASTFVAPGSETLIGGAGTTYGQCGQSLLLLISK.

A signal peptide spans 1 to 26; that stretch reads MKCPKILAALLGCAVLAGVPAMPAHA. Residues aspartate 154, glutamate 255, threonine 256, asparagine 258, and aspartate 285 each contribute to the Ca(2+) site. Aspartate 401 (nucleophile) is an active-site residue. Cysteine 410 and cysteine 422 form a disulfide bridge. The active-site Proton donor is the glutamate 461. 2 disulfide bridges follow: cysteine 546–cysteine 616 and cysteine 738–cysteine 766.

It belongs to the glycosyl hydrolase 13 family. Monomer. Ca(2+) is required as a cofactor.

The protein localises to the secreted. The enzyme catalyses Hydrolysis of (1-&gt;6)-alpha-D-glucosidic branch linkages in glycogen, amylopectin and their beta-limit dextrins.. This chain is Isoamylase (iam), found in Pseudomonas amyloderamosa.